The following is a 428-amino-acid chain: Adenylosuccinate synthetase (428 aa).

Residues 12-18 and 40-42 contribute to the GTP site; these read GDEGKGK and GHT. Asp13 acts as the Proton acceptor in catalysis. Positions 13 and 40 each coordinate Mg(2+). Residues 13–16, 38–41, Thr131, Arg145, Gln226, Thr241, and Arg305 contribute to the IMP site; these read DEGK and NAGH. Residue His41 is the Proton donor of the active site. Substrate is bound at residue 301 to 307; it reads ATTGRKR. Residues Arg307, 333–335, and 415–417 each bind GTP; these read KLD and SVG.

The protein belongs to the adenylosuccinate synthetase family. Homodimer. Mg(2+) serves as cofactor.

It localises to the cytoplasm. The catalysed reaction is IMP + L-aspartate + GTP = N(6)-(1,2-dicarboxyethyl)-AMP + GDP + phosphate + 2 H(+). The protein operates within purine metabolism; AMP biosynthesis via de novo pathway; AMP from IMP: step 1/2. Plays an important role in the de novo pathway of purine nucleotide biosynthesis. Catalyzes the first committed step in the biosynthesis of AMP from IMP. This is Adenylosuccinate synthetase from Nitratidesulfovibrio vulgaris (strain DSM 19637 / Miyazaki F) (Desulfovibrio vulgaris).